Consider the following 255-residue polypeptide: Pyrroloquinoline-quinone synthase (255 aa).

This sequence belongs to the PqqC family.

The enzyme catalyses 6-(2-amino-2-carboxyethyl)-7,8-dioxo-1,2,3,4,7,8-hexahydroquinoline-2,4-dicarboxylate + 3 O2 = pyrroloquinoline quinone + 2 H2O2 + 2 H2O + H(+). It participates in cofactor biosynthesis; pyrroloquinoline quinone biosynthesis. In terms of biological role, ring cyclization and eight-electron oxidation of 3a-(2-amino-2-carboxyethyl)-4,5-dioxo-4,5,6,7,8,9-hexahydroquinoline-7,9-dicarboxylic-acid to PQQ. This chain is Pyrroloquinoline-quinone synthase, found in Cereibacter sphaeroides (strain ATCC 17025 / ATH 2.4.3) (Rhodobacter sphaeroides).